Consider the following 500-residue polypeptide: MTDAVKVGFVPLSTAPKGVLVVFTDESMKFGPASRKHLVNAGDVVKRAAAAAEFKGKSGSALDILAPQGVKAARLIVVGTGKAGSVKDEDFIKLGGTATGKIGSNASAVTLVAELPGGAMKPHQAAALAVGARLRGYKFDRYKTKTKDKDKALVAQFSVAVADVAAARKAFIRDAHVANGVVLARELVNEPPNVLYPAEFARRAAQLRKLGVKVEIFDVKAMEKLGMGALLGVSQGSYHPGRMVVMRWNGASNKADKPVAFVGKGVCFDTGGISIKPAGSMEEMKGDMAGAACVVGLMHALAARKAKVNAVGAIGIVENMPDGNAQRPGDIVKTMSGQTIEIINTDAEGRLVLADVLWYVTQKHKPKFIVDLATLTGAILVALGTEYAGLFSNNDQLSERLSKSGDATGERVWRMPLGPEFDKQIDSKFADMKNAAGRWGGSITAAQLLQRFVDNTPWAHLDIAGTAMGAPATDINTSWGSGYGVRLLDHLVAQHYETKR.

Mn(2+)-binding residues include lysine 264 and aspartate 269. Residue lysine 276 is part of the active site. 3 residues coordinate Mn(2+): aspartate 287, aspartate 346, and glutamate 348. The active site involves arginine 350.

This sequence belongs to the peptidase M17 family. The cofactor is Mn(2+).

The protein resides in the cytoplasm. It carries out the reaction Release of an N-terminal amino acid, Xaa-|-Yaa-, in which Xaa is preferably Leu, but may be other amino acids including Pro although not Arg or Lys, and Yaa may be Pro. Amino acid amides and methyl esters are also readily hydrolyzed, but rates on arylamides are exceedingly low.. The catalysed reaction is Release of an N-terminal amino acid, preferentially leucine, but not glutamic or aspartic acids.. Its function is as follows. Presumably involved in the processing and regular turnover of intracellular proteins. Catalyzes the removal of unsubstituted N-terminal amino acids from various peptides. In Afipia carboxidovorans (strain ATCC 49405 / DSM 1227 / KCTC 32145 / OM5) (Oligotropha carboxidovorans), this protein is Probable cytosol aminopeptidase.